The chain runs to 455 residues: Probable hexose phosphate transport protein (455 aa).

5 helical membrane passes run 34–54 (IFYS…SFTF), 70–90 (LGII…VSGV), 113–133 (IFFG…LNGW), 161–181 (VWST…GFII), and 185–205 (GWRG…LVLI). The disordered stretch occupies residues 219–242 (PIEKYKRDPHHAHHEGKSASEGTE). A run of 6 helical transmembrane segments spans residues 257–277 (YVLT…IYIV), 302–322 (FCVS…GWLS), 331–351 (GPMN…MWFS), 363–383 (LLFV…LAAA), 394–414 (ASGF…YPLG), and 424–444 (GFFI…LPTW).

Belongs to the major facilitator superfamily. Organophosphate:Pi antiporter (OPA) (TC 2.A.1.4) family.

Its subcellular location is the cell membrane. Transport protein for sugar phosphate uptake. This Chlamydia pneumoniae (Chlamydophila pneumoniae) protein is Probable hexose phosphate transport protein (uhpC).